The following is a 189-amino-acid chain: Interferon alpha-G (189 aa).

A signal peptide spans 1–23; it reads MAPAWSLLLALLLLSCNAICSLG. 2 disulfides stabilise this stretch: C24–C122 and C52–C162.

It belongs to the alpha/beta interferon family.

Its subcellular location is the secreted. In terms of biological role, produced by macrophages, IFN-alpha have antiviral activities. Interferon stimulates the production of two enzymes: a protein kinase and an oligoadenylate synthetase. This Bos taurus (Bovine) protein is Interferon alpha-G (IFNAG).